The following is a 95-amino-acid chain: MNNKLTALIFLGLLAIASCKWLNEKSIQNKIDEKIGKNFLGGMAKAVVHKLAKNEFMCVANVDMTKSCDTHCQKASGEKGYCHGTKCKCGVPLSY.

An N-terminal signal peptide occupies residues 1–19 (MNNKLTALIFLGLLAIASC). The 41-residue stretch at 55 to 95 (EFMCVANVDMTKSCDTHCQKASGEKGYCHGTKCKCGVPLSY) folds into the BetaSPN-type CS-alpha/beta domain. 3 disulfides stabilise this stretch: C58–C82, C68–C87, and C72–C89.

Belongs to the long chain scorpion toxin family. Class 3 subfamily. As to expression, expressed by the venom gland.

The protein resides in the secreted. Its function is as follows. Has antimicrobial activity against yeasts and bacteria. This chain is Opiscorpine-3, found in Opistophthalmus carinatus (African yellow leg scorpion).